The chain runs to 281 residues: ATP phosphoribosyltransferase (281 aa).

The protein belongs to the ATP phosphoribosyltransferase family. Long subfamily. It depends on Mg(2+) as a cofactor.

It is found in the cytoplasm. The enzyme catalyses 1-(5-phospho-beta-D-ribosyl)-ATP + diphosphate = 5-phospho-alpha-D-ribose 1-diphosphate + ATP. It participates in amino-acid biosynthesis; L-histidine biosynthesis; L-histidine from 5-phospho-alpha-D-ribose 1-diphosphate: step 1/9. Feedback inhibited by histidine. Functionally, catalyzes the condensation of ATP and 5-phosphoribose 1-diphosphate to form N'-(5'-phosphoribosyl)-ATP (PR-ATP). Has a crucial role in the pathway because the rate of histidine biosynthesis seems to be controlled primarily by regulation of HisG enzymatic activity. The polypeptide is ATP phosphoribosyltransferase (Corynebacterium glutamicum (strain R)).